A 314-amino-acid polypeptide reads, in one-letter code: Homoserine O-acetyltransferase (314 aa).

Residue cysteine 142 is the Acyl-thioester intermediate of the active site. Substrate is bound by residues lysine 163 and serine 192. Histidine 235 serves as the catalytic Proton acceptor. Glutamate 237 is an active-site residue. Residue arginine 249 coordinates substrate.

The protein belongs to the MetA family.

The protein localises to the cytoplasm. The enzyme catalyses L-homoserine + acetyl-CoA = O-acetyl-L-homoserine + CoA. Its pathway is amino-acid biosynthesis; L-methionine biosynthesis via de novo pathway; O-acetyl-L-homoserine from L-homoserine: step 1/1. Functionally, transfers an acetyl group from acetyl-CoA to L-homoserine, forming acetyl-L-homoserine. The sequence is that of Homoserine O-acetyltransferase from Azobacteroides pseudotrichonymphae genomovar. CFP2.